The primary structure comprises 629 residues: Keratin, type II cytoskeletal 3 (629 aa).

The head stretch occupies residues 1 to 182 (MNRQVCKTSG…DPQIGQVRAQ (182 aa)). Phosphoserine occurs at positions 13 and 62. The segment at 183–218 (EREQIKTLNNKFASFIDKVRFLEQQNKVLETKWELL) is coil 1A. The IF rod domain occupies 183-498 (EREQIKTLNN…KLLEGEESRM (316 aa)). Residues 219-239 (QRQGPNSVTGTNNLEPLFENR) are linker 1. The tract at residues 240 to 331 (INYLRSYLDS…TLYDAELSQM (92 aa)) is coil 1B. N6,N6-dimethyllysine is present on K281. The tract at residues 332 to 355 (QSHVSDMSVVLSMDNNRSLDLDSI) is linker 12. S349 carries the phosphoserine modification. The coil 2 stretch occupies residues 356 to 494 (IAEVRAQYED…ATYRKLLEGE (139 aa)). Positions 495 to 629 (ESRMSGECQS…FSQSSQRYSR (135 aa)) are tail. The tract at residues 603 to 629 (SGGGFSSGSSSRGSSVKFSQSSQRYSR) is disordered. A compositionally biased stretch (polar residues) spans 618-629 (VKFSQSSQRYSR).

Belongs to the intermediate filament family. In terms of assembly, heterotetramer of two type I and two type II keratins. Keratin-3 associates with keratin-12. As to expression, cornea specific. Expressed in the basal cells of corneal epithelium and stroma. Also expressed in esophageal epithelium.

This is Keratin, type II cytoskeletal 3 (KRT3) from Oryctolagus cuniculus (Rabbit).